The following is a 137-amino-acid chain: Gonadotropin subunit beta-2 (137 aa).

An N-terminal signal peptide occupies residues methionine 1–alanine 24. Disulfide bonds link cysteine 30–cysteine 76, cysteine 44–cysteine 91, cysteine 47–cysteine 129, cysteine 55–cysteine 107, cysteine 59–cysteine 109, and cysteine 112–cysteine 119. Asparagine 34 is a glycosylation site (N-linked (GlcNAc...) asparagine).

It belongs to the glycoprotein hormones subunit beta family. Heterodimer of an alpha and a beta chain.

The protein resides in the secreted. Functionally, involved in gametogenesis and steroidogenesis. In Acanthopagrus latus (Yellowfin seabream), this protein is Gonadotropin subunit beta-2 (cgbb).